The chain runs to 110 residues: Large ribosomal subunit protein P2 (110 aa).

The disordered stretch occupies residues 63–110; the sequence is ASVPSGGGVAAAAPAAGGGGADPAEAKEEKKEEPEEESDDDMGFGLFD. Basic and acidic residues predominate over residues 86 to 95; it reads AEAKEEKKEE.

Belongs to the eukaryotic ribosomal protein P1/P2 family. P1 and P2 exist as dimers at the large ribosomal subunit. In terms of processing, phosphorylated.

In terms of biological role, plays an important role in the elongation step of protein synthesis. The sequence is that of Large ribosomal subunit protein P2 from Cryptochiton stelleri (Giant gumboot chiton).